The following is a 146-amino-acid chain: Hemoglobin subunit beta (146 aa).

The residue at position 1 (V1) is an N-acetylvaline. The region spanning 2-146 is the Globin domain; that stretch reads HLTGEEKTAV…VANALAHKYH (145 aa). Position 12 is a phosphothreonine (T12). S44 is subject to Phosphoserine. K59 carries the N6-acetyllysine modification. Heme b is bound at residue H63. K82 is subject to N6-acetyllysine. H92 is a heme b binding site. Position 93 is an S-nitrosocysteine (C93). K144 bears the N6-acetyllysine mark.

Belongs to the globin family. As to quaternary structure, heterotetramer of two alpha chains and two beta chains. As to expression, red blood cells.

In terms of biological role, involved in oxygen transport from the lung to the various peripheral tissues. In Nasua nasua (Ring-tailed coati), this protein is Hemoglobin subunit beta (HBB).